The primary structure comprises 236 residues: 2-C-methyl-D-erythritol 4-phosphate cytidylyltransferase (236 aa).

Belongs to the IspD/TarI cytidylyltransferase family. IspD subfamily. Homodimer.

The catalysed reaction is 2-C-methyl-D-erythritol 4-phosphate + CTP + H(+) = 4-CDP-2-C-methyl-D-erythritol + diphosphate. It functions in the pathway isoprenoid biosynthesis; isopentenyl diphosphate biosynthesis via DXP pathway; isopentenyl diphosphate from 1-deoxy-D-xylulose 5-phosphate: step 2/6. In terms of biological role, catalyzes the formation of 4-diphosphocytidyl-2-C-methyl-D-erythritol from CTP and 2-C-methyl-D-erythritol 4-phosphate (MEP). The protein is 2-C-methyl-D-erythritol 4-phosphate cytidylyltransferase of Enterobacter sp. (strain 638).